A 478-amino-acid polypeptide reads, in one-letter code: Cytochrome c-552 (478 aa).

The signal sequence occupies residues 1–27 (MKKQWTRRSAAAIAMVTTLLLSSHSFA). Histidine 91 lines the heme c pocket. Heme is bound by residues cysteine 119, cysteine 122, and lysine 123. Positions 157, 160, 161, 206, 209, and 210 each coordinate heme c. Ca(2+)-binding residues include glutamate 212, tyrosine 213, lysine 258, and glutamine 260. Position 213 (tyrosine 213) interacts with substrate. Histidine 261 is a binding site for substrate. Heme c-binding residues include histidine 272, cysteine 279, cysteine 282, histidine 283, histidine 298, cysteine 311, cysteine 314, histidine 315, and histidine 390.

This sequence belongs to the cytochrome c-552 family. Ca(2+) serves as cofactor. It depends on heme c as a cofactor.

Its subcellular location is the periplasm. It catalyses the reaction 6 Fe(III)-[cytochrome c] + NH4(+) + 2 H2O = 6 Fe(II)-[cytochrome c] + nitrite + 8 H(+). It functions in the pathway nitrogen metabolism; nitrate reduction (assimilation). In terms of biological role, catalyzes the reduction of nitrite to ammonia, consuming six electrons in the process. This chain is Cytochrome c-552, found in Aliivibrio salmonicida (strain LFI1238) (Vibrio salmonicida (strain LFI1238)).